The following is a 138-amino-acid chain: Small ribosomal subunit protein uS11c (138 aa).

A disordered region spans residues 1–23; it reads MAKTIPRIGSRKNGRIGSRKNTR. The span at 9 to 23 shows a compositional bias: basic residues; the sequence is GSRKNGRIGSRKNTR.

It belongs to the universal ribosomal protein uS11 family. As to quaternary structure, part of the 30S ribosomal subunit.

The protein localises to the plastid. It localises to the chloroplast. This is Small ribosomal subunit protein uS11c from Daucus carota (Wild carrot).